The following is a 424-amino-acid chain: Anaerobic glycerol-3-phosphate dehydrogenase subunit B (424 aa).

This sequence belongs to the anaerobic G-3-P dehydrogenase subunit B family. In terms of assembly, composed of a catalytic GlpA/B dimer and of membrane bound GlpC. It depends on FMN as a cofactor.

It catalyses the reaction a quinone + sn-glycerol 3-phosphate = dihydroxyacetone phosphate + a quinol. Its pathway is polyol metabolism; glycerol degradation via glycerol kinase pathway; glycerone phosphate from sn-glycerol 3-phosphate (anaerobic route): step 1/1. Conversion of glycerol 3-phosphate to dihydroxyacetone. Uses fumarate or nitrate as electron acceptor. This is Anaerobic glycerol-3-phosphate dehydrogenase subunit B from Yersinia pseudotuberculosis serotype I (strain IP32953).